A 422-amino-acid chain; its full sequence is Glutamate-1-semialdehyde 2,1-aminomutase (422 aa).

Lys265 carries the N6-(pyridoxal phosphate)lysine modification.

Belongs to the class-III pyridoxal-phosphate-dependent aminotransferase family. HemL subfamily. The cofactor is pyridoxal 5'-phosphate.

It localises to the cytoplasm. The catalysed reaction is (S)-4-amino-5-oxopentanoate = 5-aminolevulinate. It participates in porphyrin-containing compound metabolism; protoporphyrin-IX biosynthesis; 5-aminolevulinate from L-glutamyl-tRNA(Glu): step 2/2. This Methanococcoides burtonii (strain DSM 6242 / NBRC 107633 / OCM 468 / ACE-M) protein is Glutamate-1-semialdehyde 2,1-aminomutase.